The following is a 252-amino-acid chain: uncharacterized protein (252 aa).

10 tandem repeats follow at residues 68 to 82 (TYNQSQNVCPQDLVD), 83 to 97 (TYNQSQNVCPQDLVD), 98 to 112 (TYNQSQNVCPQDLVD), 113 to 127 (TYNQSQNVCPQDLVD), 128 to 142 (TYNQSQNVCPQDLVD), 143 to 157 (TYNQSQNVCPQDLVD), 158 to 172 (TYNQSQNVYTQDLID), 173 to 187 (TYNQSQNVCPQDLVD), 188 to 202 (TYNQSQNVCPQDLVD), and 203 to 217 (TYNQSQNVCPQDLVD). Residues 68-246 (TYNQSQNVCP…LIDTYNQSQN (179 aa)) are 13 X 15 AA tandem repeats. An 11; truncated repeat occupies 218 to 230 (TYNQSQNVCPQDL). The stretch at 231-239 (NVYTQDLID) is one 12; truncated repeat. A 13; truncated repeat occupies 240–246 (TYNQSQN).

A protein probably derived from this gene is found in cuboidal crystalline inclusions, but is not toxic even when coexpressed with upstream ORF1. The protein runs anomalously as a 50 kDa band in gels. This is an uncharacterized protein from Bacillus thuringiensis subsp. kurstaki.